A 475-amino-acid chain; its full sequence is ATP synthase subunit beta (475 aa).

Glycine 155–threonine 162 serves as a coordination point for ATP.

This sequence belongs to the ATPase alpha/beta chains family. F-type ATPases have 2 components, CF(1) - the catalytic core - and CF(0) - the membrane proton channel. CF(1) has five subunits: alpha(3), beta(3), gamma(1), delta(1), epsilon(1). CF(0) has three main subunits: a(1), b(2) and c(9-12). The alpha and beta chains form an alternating ring which encloses part of the gamma chain. CF(1) is attached to CF(0) by a central stalk formed by the gamma and epsilon chains, while a peripheral stalk is formed by the delta and b chains.

It localises to the cell inner membrane. It carries out the reaction ATP + H2O + 4 H(+)(in) = ADP + phosphate + 5 H(+)(out). Produces ATP from ADP in the presence of a proton gradient across the membrane. The catalytic sites are hosted primarily by the beta subunits. The sequence is that of ATP synthase subunit beta from Rhizobium etli (strain ATCC 51251 / DSM 11541 / JCM 21823 / NBRC 15573 / CFN 42).